Here is a 275-residue protein sequence, read N- to C-terminus: Large ribosomal subunit protein uL2 (275 aa).

Residues 35 to 49 (DSQSSTAGRNNNGRI) show a composition bias toward polar residues. 2 disordered regions span residues 35 to 59 (DSQS…GGHK) and 224 to 275 (AMNP…RHKR). The segment covering 50-59 (TTRHKGGGHK) has biased composition (basic residues).

This sequence belongs to the universal ribosomal protein uL2 family. In terms of assembly, part of the 50S ribosomal subunit. Forms a bridge to the 30S subunit in the 70S ribosome.

In terms of biological role, one of the primary rRNA binding proteins. Required for association of the 30S and 50S subunits to form the 70S ribosome, for tRNA binding and peptide bond formation. It has been suggested to have peptidyltransferase activity; this is somewhat controversial. Makes several contacts with the 16S rRNA in the 70S ribosome. This chain is Large ribosomal subunit protein uL2, found in Burkholderia cenocepacia (strain HI2424).